A 569-amino-acid polypeptide reads, in one-letter code: Proline--tRNA ligase (569 aa).

Belongs to the class-II aminoacyl-tRNA synthetase family. ProS type 1 subfamily. As to quaternary structure, homodimer.

The protein localises to the cytoplasm. The catalysed reaction is tRNA(Pro) + L-proline + ATP = L-prolyl-tRNA(Pro) + AMP + diphosphate. Catalyzes the attachment of proline to tRNA(Pro) in a two-step reaction: proline is first activated by ATP to form Pro-AMP and then transferred to the acceptor end of tRNA(Pro). As ProRS can inadvertently accommodate and process non-cognate amino acids such as alanine and cysteine, to avoid such errors it has two additional distinct editing activities against alanine. One activity is designated as 'pretransfer' editing and involves the tRNA(Pro)-independent hydrolysis of activated Ala-AMP. The other activity is designated 'posttransfer' editing and involves deacylation of mischarged Ala-tRNA(Pro). The misacylated Cys-tRNA(Pro) is not edited by ProRS. This chain is Proline--tRNA ligase, found in Shewanella loihica (strain ATCC BAA-1088 / PV-4).